A 516-amino-acid chain; its full sequence is ADP-ribosylation factor GTPase-activating protein 3 (516 aa).

The 117-residue stretch at 10 to 126 (LTIFKRLRSV…IKSLASQATR (117 aa)) folds into the Arf-GAP domain. A C4-type zinc finger spans residues 25–48 (CFDCGAKNPSWASITYGVFLCIDC). The segment at 170-199 (AEPSSLTSRPVETTLENNEGGQEQGPSVEG) is disordered. Residues 173-194 (SSLTSRPVETTLENNEGGQEQG) are compositionally biased toward polar residues. Ser-231 bears the Phosphoserine mark. The stretch at 243 to 264 (NEIEKQAQAADKMKEQEDLAKA) forms a coiled coil. Phosphoserine occurs at positions 270, 274, 331, and 370. A disordered region spans residues 392–414 (KTTGYSDRPTARRKPDYEPVENT). 6 positions are modified to phosphoserine: Ser-428, Ser-451, Ser-453, Ser-455, Ser-457, and Ser-458.

The protein localises to the cytoplasm. It localises to the golgi apparatus membrane. GAP activity stimulated by phosphatidylinositol 4,5-bisphosphate (PIP2). Functionally, GTPase-activating protein (GAP) for ADP ribosylation factor 1 (ARF1). Hydrolysis of ARF1-bound GTP may lead to dissociation of coatomer from Golgi-derived membranes to allow fusion with target membranes. This chain is ADP-ribosylation factor GTPase-activating protein 3, found in Macaca fascicularis (Crab-eating macaque).